Here is a 319-residue protein sequence, read N- to C-terminus: Adenosine receptor A3 (319 aa).

At 1–15 (MEADNTTETDWLNIT) the chain is on the extracellular side. Asn-5 and Asn-13 each carry an N-linked (GlcNAc...) asparagine glycan. Residues 16–38 (YITMEAAIGLCAVVGNMLVIWVV) form a helical membrane-spanning segment. The Cytoplasmic segment spans residues 39 to 49 (KLNPTLRTTTV). The chain crosses the membrane as a helical span at residues 50–73 (YFIVSLALADIAVGVLVIPLAIAV). The Extracellular segment spans residues 74-85 (SLQVKMHFYACL). Cys-84 and Cys-167 form a disulfide bridge. A helical membrane pass occupies residues 86-107 (FMSCVLLIFTHASIMSLLAIAV). Residues 108 to 127 (HRYLRVKLTVRYRTVTTQRR) lie on the Cytoplasmic side of the membrane. The chain crosses the membrane as a helical span at residues 128–149 (IWLFLGLCWLVSFLVGLTPMFG). Residues 150-178 (WNRKATLASSQNSSTLLCHFRSVVSLDYM) are Extracellular-facing. Asn-161 carries N-linked (GlcNAc...) asparagine glycosylation. Residues 179 to 199 (VFFSFITWILVPLVVMCIIYL) form a helical membrane-spanning segment. Topologically, residues 200-232 (DIFYIIRNKLSQNLTGFRETRAFYGREFKTAKS) are cytoplasmic. The helical transmembrane segment at 233–256 (LFLVLFLFALCWLPLSIINFVSYF) threads the bilayer. At 257–262 (DVKIPD) the chain is on the extracellular side. A helical membrane pass occupies residues 263-285 (VAMCLGILLSHANSMMNPIVYAC). Residues 286 to 319 (KIKKFKETYFLILRAVRLCQTSDSLDSNMEQTTE) are Cytoplasmic-facing. Cys-304 is lipidated: S-palmitoyl cysteine.

The protein belongs to the G-protein coupled receptor 1 family. Phosphorylation on Thr-317 and Thr-318 may be crucial for rapid desensitization. Phosphorylation on Thr-317 may be necessary for phosphorylation on Thr-318 to occur.

The protein resides in the cell membrane. In terms of biological role, receptor for adenosine. The activity of this receptor is mediated by G proteins which inhibits adenylyl cyclase. The sequence is that of Adenosine receptor A3 (Adora3) from Mus musculus (Mouse).